A 144-amino-acid chain; its full sequence is Large ribosomal subunit protein uL11 (144 aa).

The protein belongs to the universal ribosomal protein uL11 family. Part of the ribosomal stalk of the 50S ribosomal subunit. Interacts with L10 and the large rRNA to form the base of the stalk. L10 forms an elongated spine to which L12 dimers bind in a sequential fashion forming a multimeric L10(L12)X complex. In terms of processing, one or more lysine residues are methylated.

Its function is as follows. Forms part of the ribosomal stalk which helps the ribosome interact with GTP-bound translation factors. The polypeptide is Large ribosomal subunit protein uL11 (Marinomonas sp. (strain MWYL1)).